We begin with the raw amino-acid sequence, 345 residues long: S-adenosylmethionine:tRNA ribosyltransferase-isomerase (345 aa).

The protein belongs to the QueA family. Monomer.

It is found in the cytoplasm. The catalysed reaction is 7-aminomethyl-7-carbaguanosine(34) in tRNA + S-adenosyl-L-methionine = epoxyqueuosine(34) in tRNA + adenine + L-methionine + 2 H(+). It functions in the pathway tRNA modification; tRNA-queuosine biosynthesis. Transfers and isomerizes the ribose moiety from AdoMet to the 7-aminomethyl group of 7-deazaguanine (preQ1-tRNA) to give epoxyqueuosine (oQ-tRNA). The chain is S-adenosylmethionine:tRNA ribosyltransferase-isomerase from Helicobacter pylori (strain P12).